A 269-amino-acid chain; its full sequence is MTQATPQRIAIAGASGRMGQMLIEAVLDTEGVELAVALDRAGSPSIGQDAGAALGRPCGVTITDQLDALAQADCLIDFTRPEGTLQHLQACLRHDVKMVIGTTGFDSSGRAEIEVAAQKIAIVFAPNMSVGVNATLKLLDMAARILNSGYDVEIFEAHHRNKVDAPSGTALIMGETVASAWDVALPDVATWTRHGDTGVRKPGTIGFSVVRGGDIVGDHTVFFCGTGERIEISHRSSSRATYAQGAVRAARFLARQDNGLYDMQAVLGL.

Residues 13–18 and Asp-39 contribute to the NAD(+) site; that span reads GASGRM. Arg-40 serves as a coordination point for NADP(+). Residues 101–103 and 125–128 contribute to the NAD(+) site; these read GTT and APNM. The active-site Proton donor/acceptor is the His-158. (S)-2,3,4,5-tetrahydrodipicolinate is bound at residue His-159. The active-site Proton donor is Lys-162. 168 to 169 is a binding site for (S)-2,3,4,5-tetrahydrodipicolinate; the sequence is GT.

It belongs to the DapB family.

Its subcellular location is the cytoplasm. It carries out the reaction (S)-2,3,4,5-tetrahydrodipicolinate + NAD(+) + H2O = (2S,4S)-4-hydroxy-2,3,4,5-tetrahydrodipicolinate + NADH + H(+). The enzyme catalyses (S)-2,3,4,5-tetrahydrodipicolinate + NADP(+) + H2O = (2S,4S)-4-hydroxy-2,3,4,5-tetrahydrodipicolinate + NADPH + H(+). It participates in amino-acid biosynthesis; L-lysine biosynthesis via DAP pathway; (S)-tetrahydrodipicolinate from L-aspartate: step 4/4. Functionally, catalyzes the conversion of 4-hydroxy-tetrahydrodipicolinate (HTPA) to tetrahydrodipicolinate. This chain is 4-hydroxy-tetrahydrodipicolinate reductase, found in Bordetella bronchiseptica (strain ATCC BAA-588 / NCTC 13252 / RB50) (Alcaligenes bronchisepticus).